We begin with the raw amino-acid sequence, 324 residues long: Meiotic recombination protein DLH1 (324 aa).

ATP is bound at residue 112–119; that stretch reads GEFRCGKT. Arginine 214 contacts dsDNA. Arginine 214, tyrosine 217, arginine 220, arginine 226, and arginine 296 together coordinate ssDNA. Arginine 220 and arginine 226 together coordinate dsDNA.

Belongs to the RecA family. DMC1 subfamily. Double stacked ring-shaped homooctamer.

It localises to the nucleus. Its function is as follows. Required for meiotic recombination, synaptonemal complex formation and cell cycle progression. The protein is Meiotic recombination protein DLH1 (DLH1) of Candida albicans (Yeast).